We begin with the raw amino-acid sequence, 522 residues long: Protein nucleotidyltransferase YdiU (522 aa).

Residues Gly-109, Gly-111, Arg-112, Lys-132, Asp-144, Gly-145, Arg-195, and Arg-202 each coordinate ATP. The Proton acceptor role is filled by Asp-271. Mg(2+) is bound by residues Asn-272 and Asp-281. Asp-281 is a binding site for ATP.

This sequence belongs to the SELO family. The cofactor is Mg(2+). It depends on Mn(2+) as a cofactor.

It catalyses the reaction L-seryl-[protein] + ATP = 3-O-(5'-adenylyl)-L-seryl-[protein] + diphosphate. The catalysed reaction is L-threonyl-[protein] + ATP = 3-O-(5'-adenylyl)-L-threonyl-[protein] + diphosphate. It carries out the reaction L-tyrosyl-[protein] + ATP = O-(5'-adenylyl)-L-tyrosyl-[protein] + diphosphate. The enzyme catalyses L-histidyl-[protein] + UTP = N(tele)-(5'-uridylyl)-L-histidyl-[protein] + diphosphate. It catalyses the reaction L-seryl-[protein] + UTP = O-(5'-uridylyl)-L-seryl-[protein] + diphosphate. The catalysed reaction is L-tyrosyl-[protein] + UTP = O-(5'-uridylyl)-L-tyrosyl-[protein] + diphosphate. In terms of biological role, nucleotidyltransferase involved in the post-translational modification of proteins. It can catalyze the addition of adenosine monophosphate (AMP) or uridine monophosphate (UMP) to a protein, resulting in modifications known as AMPylation and UMPylation. The polypeptide is Protein nucleotidyltransferase YdiU (Burkholderia lata (strain ATCC 17760 / DSM 23089 / LMG 22485 / NCIMB 9086 / R18194 / 383)).